A 302-amino-acid polypeptide reads, in one-letter code: Protein FdhE homolog (302 aa).

Belongs to the FdhE family.

It is found in the cytoplasm. Necessary for formate dehydrogenase activity. This chain is Protein FdhE homolog, found in Haemophilus influenzae (strain PittEE).